A 181-amino-acid chain; its full sequence is Large ribosomal subunit protein uL5 (181 aa).

This sequence belongs to the universal ribosomal protein uL5 family. In terms of assembly, part of the 50S ribosomal subunit; contacts the 5S rRNA and probably tRNA. Forms a bridge to the 30S subunit in the 70S ribosome.

This is one of the proteins that bind and probably mediate the attachment of the 5S RNA into the large ribosomal subunit, where it forms part of the central protuberance. In the 70S ribosome it contacts protein S13 of the 30S subunit (bridge B1b), connecting the 2 subunits; this bridge is implicated in subunit movement. May contact the P site tRNA; the 5S rRNA and some of its associated proteins might help stabilize positioning of ribosome-bound tRNAs. The sequence is that of Large ribosomal subunit protein uL5 from Methanococcus maripaludis (strain C5 / ATCC BAA-1333).